Consider the following 180-residue polypeptide: ATP-dependent protease subunit HslV (180 aa).

The active site involves threonine 5. Positions 165, 168, and 171 each coordinate Na(+).

Belongs to the peptidase T1B family. HslV subfamily. A double ring-shaped homohexamer of HslV is capped on each side by a ring-shaped HslU homohexamer. The assembly of the HslU/HslV complex is dependent on binding of ATP.

The protein localises to the cytoplasm. The enzyme catalyses ATP-dependent cleavage of peptide bonds with broad specificity.. With respect to regulation, allosterically activated by HslU binding. Protease subunit of a proteasome-like degradation complex believed to be a general protein degrading machinery. This is ATP-dependent protease subunit HslV from Helicobacter pylori (strain P12).